Reading from the N-terminus, the 173-residue chain is Mesencephalic astrocyte-derived neurotrophic factor homolog (173 aa).

An N-terminal signal peptide occupies residues 1-22 (MNTSQIVLMFCLVVGVAQTALA). 4 disulfide bridges follow: Cys28-Cys114, Cys31-Cys103, Cys61-Cys72, and Cys148-Cys151.

It belongs to the ARMET family.

It localises to the secreted. Its function is as follows. Required during the maturation of the embryonic nervous system for maintenance of neuronal and cuticular connectivity. Essential for maintenance of dopaminergic neurons and dopamine levels. The chain is Mesencephalic astrocyte-derived neurotrophic factor homolog from Drosophila grimshawi (Hawaiian fruit fly).